Here is a 125-residue protein sequence, read N- to C-terminus: NADPH-dependent 7-cyano-7-deazaguanine reductase (125 aa).

C40 serves as the catalytic Thioimide intermediate. The active-site Proton donor is D47. Substrate-binding positions include 62–64 (LET) and 81–82 (HE).

The protein belongs to the GTP cyclohydrolase I family. QueF type 1 subfamily.

It localises to the cytoplasm. The enzyme catalyses 7-aminomethyl-7-carbaguanine + 2 NADP(+) = 7-cyano-7-deazaguanine + 2 NADPH + 3 H(+). It functions in the pathway tRNA modification; tRNA-queuosine biosynthesis. Its function is as follows. Catalyzes the NADPH-dependent reduction of 7-cyano-7-deazaguanine (preQ0) to 7-aminomethyl-7-deazaguanine (preQ1). This Frankia casuarinae (strain DSM 45818 / CECT 9043 / HFP020203 / CcI3) protein is NADPH-dependent 7-cyano-7-deazaguanine reductase.